The sequence spans 533 residues: Peptide chain release factor 3 (533 aa).

The tr-type G domain occupies 11–284 (RRRRTFAIIS…ALVGLSPEPL (274 aa)). Residues 20-27 (SHPDAGKT), 92-96 (DTPGH), and 146-149 (NKLD) each bind GTP.

It belongs to the TRAFAC class translation factor GTPase superfamily. Classic translation factor GTPase family. PrfC subfamily.

The protein localises to the cytoplasm. Its function is as follows. Increases the formation of ribosomal termination complexes and stimulates activities of RF-1 and RF-2. It binds guanine nucleotides and has strong preference for UGA stop codons. It may interact directly with the ribosome. The stimulation of RF-1 and RF-2 is significantly reduced by GTP and GDP, but not by GMP. This Ralstonia nicotianae (strain ATCC BAA-1114 / GMI1000) (Ralstonia solanacearum) protein is Peptide chain release factor 3.